We begin with the raw amino-acid sequence, 484 residues long: Poly(A) RNA polymerase GLD2 (484 aa).

Residues serine 62 and serine 69 each carry the phosphoserine modification. Residues 76 to 92 (KRISDEKAFPLDGKRQR) carry the Nuclear localization signal motif. Serine 95 bears the Phosphoserine mark. Mg(2+) is bound by residues aspartate 213 and aspartate 215. In terms of domain architecture, PAP-associated spans 386-440 (SLGDLLLGFLKYYATEFDWNTQMISVREAKAIPRPDDMEWRNKYICVEEPFDGTN).

Belongs to the DNA polymerase type-B-like family. GLD2 subfamily. As to quaternary structure, interacts with CPEB1, CPEB2, CPSF1 and PABPC1. Interacts with QKI isoform QKI7; promoting recruitment to miRNA miR-122 and miR-122 stabilization. Mg(2+) serves as cofactor. Requires Mn(2+) as cofactor. Ubiquitous. In brain, it is highly expressed in the cerebral cortex, cerebellum, hippocampus and olfactory bulb.

It localises to the cytoplasm. Its subcellular location is the nucleus. It catalyses the reaction RNA(n) + ATP = RNA(n)-3'-adenine ribonucleotide + diphosphate. Its function is as follows. Cytoplasmic poly(A) RNA polymerase that adds successive AMP monomers to the 3'-end of specific RNAs, forming a poly(A) tail. In contrast to the canonical nuclear poly(A) RNA polymerase, it only adds poly(A) to selected cytoplasmic mRNAs. Does not play a role in replication-dependent histone mRNA degradation. Adds a single nucleotide to the 3' end of specific miRNAs, monoadenylation stabilizes and prolongs the activity of some but not all miRNAs. This is Poly(A) RNA polymerase GLD2 (Tent2) from Mus musculus (Mouse).